The following is a 554-amino-acid chain: Solute carrier family 22 member 1 (554 aa).

At 1-24 (MPSVDDVLEQVGEFGWFQKQAFLN) the chain is on the cytoplasmic side. A helical transmembrane segment spans residues 25-45 (LCLTSVAFAPIYVGIVFLGFT). Residues 46-234 (PDHRCRSPGV…EFVGLGYRKT (189 aa)) are Extracellular-facing. N-linked (GlcNAc...) asparagine glycosylation is present at N71. The helical transmembrane segment at 235-255 (VAILYQTAFSVGLVLLSGLAY) threads the bilayer. Topologically, residues 256 to 261 (AVPHWR) are cytoplasmic. The helical transmembrane segment at 262-282 (SLQLAVSLPIFLLLLCYWFVP) threads the bilayer. The short motif at 282 to 286 (PESPR) is the Proline-rich sequence element. The Extracellular segment spans residues 283 to 347 (ESPRWLLSQK…FRTQNLRKYT (65 aa)). At S333 the chain carries Phosphoserine. A helical transmembrane segment spans residues 348–368 (FILMYLWFTSSVLYQGLIMHV). Residues 369-376 (GATGGSLY) are Cytoplasmic-facing. Residues 377 to 397 (LDFLYSALVEFPAAFVILLII) traverse the membrane as a helical segment. At 398–402 (DRFGR) the chain is on the extracellular side. Residues 403 to 423 (LYLLAGSNLLAGAACFFMIFI) form a helical membrane-spanning segment. The Cytoplasmic segment spans residues 424–431 (SHDLHWLS). Residues 432-452 (IVAACIGRMGITIVFQMVCLV) traverse the membrane as a helical segment. Topologically, residues 453 to 464 (SAELYPTFIRNL) are extracellular. The helical transmembrane segment at 465–485 (GVMVCSSLCDLGGVVAPFLVF) threads the bilayer. Residues 486–492 (RLTEVWR) are Cytoplasmic-facing. Residues 493–513 (GLPLVLFAALGLVAGGMSLLL) traverse the membrane as a helical segment. The Extracellular segment spans residues 514-554 (PETKGVALPETIEEVERLGRKAKPRDNMIYLQVKMPEPAGL).

The protein belongs to the major facilitator (TC 2.A.1) superfamily. Organic cation transporter (TC 2.A.1.19) family. In terms of processing, phosphorylated.

The protein resides in the basolateral cell membrane. It is found in the apical cell membrane. It localises to the lateral cell membrane. Its subcellular location is the basal cell membrane. The protein localises to the cell membrane. The catalysed reaction is 1-methylnicotinamide(out) = 1-methylnicotinamide(in). It carries out the reaction dopamine(out) = dopamine(in). It catalyses the reaction serotonin(out) = serotonin(in). The enzyme catalyses (R)-adrenaline(out) = (R)-adrenaline(in). The catalysed reaction is (R)-noradrenaline(out) = (R)-noradrenaline(in). It carries out the reaction histamine(out) = histamine(in). It catalyses the reaction guanidine(out) = guanidine(in). The enzyme catalyses choline(out) = choline(in). The catalysed reaction is acetylcholine(in) = acetylcholine(out). It carries out the reaction thiamine(in) = thiamine(out). It catalyses the reaction spermidine(in) = spermidine(out). The enzyme catalyses agmatine(out) = agmatine(in). The catalysed reaction is putrescine(out) = putrescine(in). It carries out the reaction (R)-carnitine(in) = (R)-carnitine(out). It catalyses the reaction O-isobutanoyl-(R)-carnitine(in) = O-isobutanoyl-(R)-carnitine(out). The enzyme catalyses O-acetyl-(R)-carnitine(in) = O-acetyl-(R)-carnitine(out). The catalysed reaction is O-3-hydroxybutanoyl-(R)-carnitine(in) = O-3-hydroxybutanoyl-(R)-carnitine(out). It carries out the reaction O-propanoyl-(R)-carnitine(in) = O-propanoyl-(R)-carnitine(out). It catalyses the reaction O-butanoyl-(R)-carnitine(in) = O-butanoyl-(R)-carnitine(out). The enzyme catalyses O-2-methylbutanoyl-(R)-carnitine(in) = O-2-methylbutanoyl-(R)-carnitine(out). The catalysed reaction is O-3-methylbutanoyl-(R)-carnitine(in) = O-3-methylbutanoyl-(R)-carnitine(out). It carries out the reaction O-hexanoyl-(R)-carnitine(in) = O-hexanoyl-(R)-carnitine(out). It catalyses the reaction L-histidyl-L-proline diketopiperazine(in) = L-histidyl-L-proline diketopiperazine(out). The enzyme catalyses (R)-salsolinol(in) = (R)-salsolinol(out). The catalysed reaction is prostaglandin F2alpha(out) = prostaglandin F2alpha(in). It carries out the reaction prostaglandin E2(out) = prostaglandin E2(in). Phosphorylation of the transporter leads to changes in its substrate affinity, resulting in a regulation of the transport activity. In contrast with rat ortholog, ASP uptake is inhibited by protein kinase A (PKA) and C (PKC) activation. ASP uptake is also endogenously activated by calmodulin, the calmodulin-dependent kinase II and LCK tyrosine kinase. Inhibited by cGMP, most likely through a cGMP-binding protein that interacts with OCT1. In terms of biological role, electrogenic voltage-dependent transporter that mediates the transport of a variety of organic cations such as endogenous bioactive amines, cationic drugs and xenobiotics. Functions as a pH- and Na(+)-independent, bidirectional transporter. Cation cellular uptake or release is driven by the electrochemical potential (i.e. membrane potential and concentration gradient) and substrate selectivity. Hydrophobicity is a major requirement for recognition in polyvalent substrates and inhibitors. Primarily expressed in the basolateral membrane of hepatocytes and proximal tubules and involved in the uptake and disposition of cationic compounds from the blood by hepatic and renal clearance. Most likely functions as an uptake carrier in enterocytes contributing to the intestinal elimination of organic cations from the systemic circulation. Transports endogenous monoamines such as N-1-methylnicotinamide (NMN), guanidine, neurotransmitters dopamine, serotonin, noradrenaline, adrenaline and histamine, and quaternary ammonium compound such as choline. Also transports natural polyamines such as spermidine, agmatine and putrescine at low affinity, but relatively high turnover. Involved in the hepatic and intestinal uptake of the vitamin B1/thiamine, hence regulating hepatic lipid and energy metabolism. Contributes to the influx and efflux of fatty acid carriers carnitines and acylcarnitines across the basolateral membrane of hepatocytes, from the liver to the systemic circulation and inversely and may be involved in regulating the systemic availability of hepatic acylcarnitines. Also capable of transporting non-amine endogenous compounds such as prostaglandin E2 (PGE2) and prostaglandin F2-alpha (PGF2-alpha). May contribute to the transport of cationic compounds in testes across the blood-testis-barrier. Also mediates the uptake of xenobiotics tributylmethylammonium (TBuMA), quinidine, N-methyl-quinine (NMQ), N-methyl-quinidine (NMQD) N-(4,4-azo-n-pentyl)-quinuclidine (APQ), azidoprocainamide methoiodide (AMP), N-(4,4-azo-n-pentyl)-21-deoxyajmalinium (APDA) and 4-(4-(dimethylamino)styryl)-N-methylpyridinium (ASP). This chain is Solute carrier family 22 member 1 (SLC22A1), found in Sus scrofa (Pig).